The sequence spans 338 residues: Glycerol-3-phosphate dehydrogenase [NAD(P)+] (338 aa).

NADPH is bound by residues Ser-13, Trp-14, and Lys-108. Residues Lys-108, Gly-139, and Ser-141 each contribute to the sn-glycerol 3-phosphate site. Ala-143 contacts NADPH. Lys-194, Asp-247, Ser-257, Arg-258, and Asn-259 together coordinate sn-glycerol 3-phosphate. The active-site Proton acceptor is Lys-194. Arg-258 provides a ligand contact to NADPH. Val-282 and Glu-284 together coordinate NADPH.

It belongs to the NAD-dependent glycerol-3-phosphate dehydrogenase family.

It is found in the cytoplasm. The enzyme catalyses sn-glycerol 3-phosphate + NAD(+) = dihydroxyacetone phosphate + NADH + H(+). It carries out the reaction sn-glycerol 3-phosphate + NADP(+) = dihydroxyacetone phosphate + NADPH + H(+). The protein operates within membrane lipid metabolism; glycerophospholipid metabolism. In terms of biological role, catalyzes the reduction of the glycolytic intermediate dihydroxyacetone phosphate (DHAP) to sn-glycerol 3-phosphate (G3P), the key precursor for phospholipid synthesis. In Streptococcus suis (strain 98HAH33), this protein is Glycerol-3-phosphate dehydrogenase [NAD(P)+].